Reading from the N-terminus, the 701-residue chain is Polyribonucleotide nucleotidyltransferase (701 aa).

Mg(2+) contacts are provided by D483 and D489. Residues 550 to 609 (PRIYTLHIPTDKIRDVIGPGGKVIRGIIEQTGVKIDVEDDGTIHVASADEASANKAIQII) enclose the KH domain. The S1 motif domain maps to 619 to 686 (GKTYLGKVVR…EGNKIKLSRK (68 aa)).

The protein belongs to the polyribonucleotide nucleotidyltransferase family. Mg(2+) serves as cofactor.

The protein localises to the cytoplasm. It carries out the reaction RNA(n+1) + phosphate = RNA(n) + a ribonucleoside 5'-diphosphate. Its function is as follows. Involved in mRNA degradation. Catalyzes the phosphorolysis of single-stranded polyribonucleotides processively in the 3'- to 5'-direction. This chain is Polyribonucleotide nucleotidyltransferase, found in Solibacter usitatus (strain Ellin6076).